Consider the following 253-residue polypeptide: Nurim homolog (253 aa).

Over 1–2 (MA) the chain is Nuclear. Residues 3-30 (TFAKVMLLLSSVATFGYTFFVVGKLMLF) traverse the membrane as a helical segment. Residues 31-56 (LSTPRSISKAHTWIFNLLDNKSRLET) are Perinuclear space-facing. Residues 57-78 (AYGPIVFDTLYLIGFIFQHSFL) form a helical membrane-spanning segment. Over 79 to 96 (KSALVKNLWRKLGLAAAE) the chain is Nuclear. Residues 97-113 (RTIYSLTSSICLHYLLK) form a helical membrane-spanning segment. Residues 114–132 (NWLPAQSIVLWQVDVDESA) lie on the Perinuclear space side of the membrane. A helical transmembrane segment spans residues 133–161 (PLWWTFVVTHGLGWAVIFGGSLIMDLPEL). At 162-188 (LGVKQVYYDLKEYGEPVAYKSSELRNL) the chain is on the nuclear side. Residues 189-207 (YSHVRHPSFVGLSVILFAT) form a helical membrane-spanning segment. The Perinuclear space portion of the chain corresponds to 208–213 (NVMSLD). A helical transmembrane segment spans residues 214–231 (RLLLASLLTVYMYVAWST). Residues 232–253 (DDKDVAYQKQQLRNKKHELKAQ) lie on the Nuclear side of the membrane.

Belongs to the nurim family.

It is found in the nucleus inner membrane. The protein is Nurim homolog (nrm) of Drosophila pseudoobscura pseudoobscura (Fruit fly).